Reading from the N-terminus, the 376-residue chain is Chaperone protein DnaJ (376 aa).

One can recognise a J domain in the interval 5–72; the sequence is DFYEVLGVPK…QKRAAYDQYG (68 aa). Residues 136–214 form a CR-type zinc finger; that stretch reads GKEAQIRIPS…CHGQGRVKKQ (79 aa). Residues Cys-149, Cys-152, Cys-166, Cys-169, Cys-188, Cys-191, Cys-202, and Cys-205 each contribute to the Zn(2+) site. CXXCXGXG motif repeat units follow at residues 149-156, 166-173, 188-195, and 202-209; these read CETCHGSG, CGTCQGSG, CPHCRGTG, and CTACHGQG. 2 disordered regions span residues 227–246 and 354–376; these read DGMR…GGPP and KKGG…SFFS. A compositionally biased stretch (gly residues) spans 237-246; that stretch reads GEPGTNGGPP. Positions 367–376 are enriched in basic and acidic residues; sequence WTDRLKSFFS.

It belongs to the DnaJ family. In terms of assembly, homodimer. Requires Zn(2+) as cofactor.

It localises to the cytoplasm. Its function is as follows. Participates actively in the response to hyperosmotic and heat shock by preventing the aggregation of stress-denatured proteins and by disaggregating proteins, also in an autonomous, DnaK-independent fashion. Unfolded proteins bind initially to DnaJ; upon interaction with the DnaJ-bound protein, DnaK hydrolyzes its bound ATP, resulting in the formation of a stable complex. GrpE releases ADP from DnaK; ATP binding to DnaK triggers the release of the substrate protein, thus completing the reaction cycle. Several rounds of ATP-dependent interactions between DnaJ, DnaK and GrpE are required for fully efficient folding. Also involved, together with DnaK and GrpE, in the DNA replication of plasmids through activation of initiation proteins. This Acidovorax ebreus (strain TPSY) (Diaphorobacter sp. (strain TPSY)) protein is Chaperone protein DnaJ.